We begin with the raw amino-acid sequence, 975 residues long: Nesprin-3 (975 aa).

Residues 1 to 925 (MTQQPQDDFD…LGSLFRRACC (925 aa)) are Cytoplasmic-facing. One copy of the Spectrin 1 repeat lies at 220–325 (REHEEYQAGV…WEEEEERLRG (106 aa)). Residues 617–645 (NHQHKMDQLSSDFQALQRSLEDLVDRCRQ) adopt a coiled-coil conformation. The Spectrin 2 repeat unit spans residues 647 to 740 (VQEHCTFSHQ…RELAESWRAL (94 aa)). Positions 917-975 (GSLFRRACCVALPLQLLLLLFLLLLFLLPIREEDRSCTLANNFARSFTLMLRYNGPPPT) constitute a KASH domain. Residues 926-946 (VALPLQLLLLLFLLLLFLLPI) form a helical; Anchor for type IV membrane protein membrane-spanning segment. The Perinuclear space portion of the chain corresponds to 947 to 975 (REEDRSCTLANNFARSFTLMLRYNGPPPT).

The protein belongs to the nesprin family. As to quaternary structure, core component of LINC complexes which are composed of inner nuclear membrane SUN domain-containing proteins coupled to outer nuclear membrane KASH domain-containing nesprins. SUN and KASH domain-containing proteins seem to bind each other promiscuously; however, differentially expression of LINC complex constituents can give rise to specific assemblies. Interacts with SUN1 and SUN2; probably forming respective LINC complexes. Interacts with PLEC (via actin-binding domain). Interacts with DST. Interacts with SYNE1 via spectrin repeats. Interacts (via KASH domain) with TOR1A (ATP-bound); the interaction is required for SYNE3 nuclear envelope localization. In terms of processing, the disulfid bond with SUN1 or SUN2 is required for stability of the respective LINC complex under tensile forces. Expressed in aortic endothelial cells (at protein level).

The protein resides in the nucleus outer membrane. The protein localises to the nucleus envelope. It is found in the rough endoplasmic reticulum. Functionally, as a component of the LINC (LInker of Nucleoskeleton and Cytoskeleton) complex involved in the connection between the nuclear lamina and the cytoskeleton. The nucleocytoplasmic interactions established by the LINC complex play an important role in the transmission of mechanical forces across the nuclear envelope and in nuclear movement and positioning. Probable anchoring protein which tethers the nucleus to the cytoskeleton by binding PLEC which can associate with the intermediate filament system. Plays a role in the regulation of aortic epithelial cell morphology, and is required for flow-induced centrosome polarization and directional migration in aortic endothelial cells. The sequence is that of Nesprin-3 from Homo sapiens (Human).